Reading from the N-terminus, the 173-residue chain is Shikimate kinase 1 (173 aa).

14 to 19 is a binding site for ATP; sequence GAGKST. Serine 18 contributes to the Mg(2+) binding site. Substrate contacts are provided by aspartate 36, arginine 60, and glycine 82. Arginine 120 serves as a coordination point for ATP. Arginine 140 contacts substrate. Position 157 (glutamine 157) interacts with ATP.

Belongs to the shikimate kinase family. Monomer. Requires Mg(2+) as cofactor.

Its subcellular location is the cytoplasm. It carries out the reaction shikimate + ATP = 3-phosphoshikimate + ADP + H(+). Its pathway is metabolic intermediate biosynthesis; chorismate biosynthesis; chorismate from D-erythrose 4-phosphate and phosphoenolpyruvate: step 5/7. Its function is as follows. Catalyzes the specific phosphorylation of the 3-hydroxyl group of shikimic acid using ATP as a cosubstrate. The sequence is that of Shikimate kinase 1 from Escherichia fergusonii (strain ATCC 35469 / DSM 13698 / CCUG 18766 / IAM 14443 / JCM 21226 / LMG 7866 / NBRC 102419 / NCTC 12128 / CDC 0568-73).